Reading from the N-terminus, the 150-residue chain is Lipoprotein signal peptidase (150 aa).

A run of 3 helical transmembrane segments spans residues 8-28 (FYAL…LAHA), 58-78 (GFSW…GWFL), and 81-101 (TTGS…NVFD). Residues aspartate 116 and aspartate 132 contribute to the active site. Residues 126 to 146 (VVFNIADLFILAGVFGTFLFL) form a helical membrane-spanning segment.

The protein belongs to the peptidase A8 family.

The protein localises to the cell membrane. It catalyses the reaction Release of signal peptides from bacterial membrane prolipoproteins. Hydrolyzes -Xaa-Yaa-Zaa-|-(S,diacylglyceryl)Cys-, in which Xaa is hydrophobic (preferably Leu), and Yaa (Ala or Ser) and Zaa (Gly or Ala) have small, neutral side chains.. The protein operates within protein modification; lipoprotein biosynthesis (signal peptide cleavage). This protein specifically catalyzes the removal of signal peptides from prolipoproteins. The protein is Lipoprotein signal peptidase of Tropheryma whipplei (strain TW08/27) (Whipple's bacillus).